The chain runs to 428 residues: Enolase (428 aa).

Gln-163 provides a ligand contact to (2R)-2-phosphoglycerate. Glu-205 serves as the catalytic Proton donor. Mg(2+) contacts are provided by Asp-242, Glu-285, and Asp-312. Residues Lys-337, Arg-366, Ser-367, and Lys-388 each coordinate (2R)-2-phosphoglycerate. Lys-337 serves as the catalytic Proton acceptor.

Belongs to the enolase family. The cofactor is Mg(2+).

It is found in the cytoplasm. The protein localises to the secreted. Its subcellular location is the cell surface. The enzyme catalyses (2R)-2-phosphoglycerate = phosphoenolpyruvate + H2O. The protein operates within carbohydrate degradation; glycolysis; pyruvate from D-glyceraldehyde 3-phosphate: step 4/5. In terms of biological role, catalyzes the reversible conversion of 2-phosphoglycerate (2-PG) into phosphoenolpyruvate (PEP). It is essential for the degradation of carbohydrates via glycolysis. The sequence is that of Enolase from Rhodopirellula baltica (strain DSM 10527 / NCIMB 13988 / SH1).